The primary structure comprises 226 residues: MNKLETNNNQYWLDRWQNDDVGFCQESPNEFLVKHFSKLNINDSSVCLIPMCGCSIDMLFFLSKGVKVVGIELSEKAVLSFFSQNSINYEVIHGNDYKLYKGDDIEIYVADIFNLPKIANNLPAFDIWYDRGAYIALPNDLRTNYAKMMLEVCPNNTQILLLVMEHDKKSQTPPYSVTQAELIKNFSAKIKFELIDSKQRDNIPDYRKAEGMTKQYYTTYLRKKQY.

Residues Trp16, Met51, Glu72, and Arg131 each coordinate S-adenosyl-L-methionine.

The protein belongs to the class I-like SAM-binding methyltransferase superfamily. TPMT family.

The protein resides in the cytoplasm. The enzyme catalyses S-adenosyl-L-methionine + a thiopurine = S-adenosyl-L-homocysteine + a thiopurine S-methylether.. This is Thiopurine S-methyltransferase from Francisella tularensis subsp. novicida (strain U112).